Reading from the N-terminus, the 563-residue chain is Arginine--tRNA ligase (563 aa).

The short motif at Pro-122–His-132 is the 'HIGH' region element.

Belongs to the class-I aminoacyl-tRNA synthetase family. In terms of assembly, monomer.

The protein localises to the cytoplasm. It carries out the reaction tRNA(Arg) + L-arginine + ATP = L-arginyl-tRNA(Arg) + AMP + diphosphate. In Ligilactobacillus salivarius (strain UCC118) (Lactobacillus salivarius), this protein is Arginine--tRNA ligase.